The chain runs to 445 residues: Argininosuccinate synthase (445 aa).

ATP contacts are provided by residues 17-25 (AFSGGLDTS) and alanine 43. L-citrulline is bound at residue tyrosine 99. 2 residues coordinate ATP: glycine 129 and threonine 131. L-aspartate is bound by residues threonine 131, asparagine 135, and aspartate 136. Asparagine 135 contacts L-citrulline. Residue aspartate 136 coordinates ATP. L-citrulline-binding residues include arginine 139 and serine 192. Residue aspartate 194 coordinates ATP. Residues threonine 201, glutamate 203, and glutamate 280 each contribute to the L-citrulline site.

Belongs to the argininosuccinate synthase family. Type 2 subfamily. As to quaternary structure, homotetramer.

It is found in the cytoplasm. It catalyses the reaction L-citrulline + L-aspartate + ATP = 2-(N(omega)-L-arginino)succinate + AMP + diphosphate + H(+). It functions in the pathway amino-acid biosynthesis; L-arginine biosynthesis; L-arginine from L-ornithine and carbamoyl phosphate: step 2/3. This chain is Argininosuccinate synthase, found in Rhodopseudomonas palustris (strain ATCC BAA-98 / CGA009).